The following is a 79-amino-acid chain: Conotoxin LiCr173 (79 aa).

The first 20 residues, 1-20 (MSGLGTMVLTLLLLVFMVTS), serve as a signal peptide directing secretion. Residues 21 to 46 (HQDGGKKQATQRNAVNIRRRKSITQR) constitute a propeptide that is removed on maturation. 3 cysteine pairs are disulfide-bonded: cysteine 52–cysteine 64, cysteine 56–cysteine 73, and cysteine 63–cysteine 77. Phenylalanine 78 carries the post-translational modification Phenylalanine amide.

This sequence belongs to the conotoxin O3 superfamily. Expressed by the venom duct.

The protein resides in the secreted. This is Conotoxin LiCr173 from Conus lividus (Livid cone).